Reading from the N-terminus, the 728-residue chain is Catalase-peroxidase (728 aa).

The first 16 residues, 1–16 (MDNPTDSAGKCPVAHG), serve as a signal peptide directing secretion. Residues 1-26 (MDNPTDSAGKCPVAHGNTPRSRSNRD) are disordered. Positions 96–218 (WHSAGTYRIT…LGAVQMGFIY (123 aa)) form a cross-link, tryptophyl-tyrosyl-methioninium (Trp-Tyr) (with M-244). The active-site Proton acceptor is histidine 97. Positions 218–244 (YVNPEGPNGNSDPLASARDIRETFARM) form a cross-link, tryptophyl-tyrosyl-methioninium (Tyr-Met) (with W-96). Residue histidine 259 participates in heme b binding.

The protein belongs to the peroxidase family. Peroxidase/catalase subfamily. Homodimer or homotetramer. Heme b serves as cofactor. Formation of the three residue Trp-Tyr-Met cross-link is important for the catalase, but not the peroxidase activity of the enzyme.

It carries out the reaction H2O2 + AH2 = A + 2 H2O. It catalyses the reaction 2 H2O2 = O2 + 2 H2O. In terms of biological role, bifunctional enzyme with both catalase and broad-spectrum peroxidase activity. The protein is Catalase-peroxidase of Rhizobium leguminosarum bv. phaseoli.